A 66-amino-acid chain; its full sequence is Large ribosomal subunit protein uL29 (66 aa).

This sequence belongs to the universal ribosomal protein uL29 family.

This chain is Large ribosomal subunit protein uL29, found in Helicobacter pylori (strain P12).